The primary structure comprises 41 residues: Large ribosomal subunit protein bL36A (41 aa).

Belongs to the bacterial ribosomal protein bL36 family.

This is Large ribosomal subunit protein bL36A from Aeromonas salmonicida (strain A449).